Reading from the N-terminus, the 89-residue chain is Small ribosomal subunit protein uS15 (89 aa).

The protein belongs to the universal ribosomal protein uS15 family. As to quaternary structure, part of the 30S ribosomal subunit. Forms a bridge to the 50S subunit in the 70S ribosome, contacting the 23S rRNA.

Its function is as follows. One of the primary rRNA binding proteins, it binds directly to 16S rRNA where it helps nucleate assembly of the platform of the 30S subunit by binding and bridging several RNA helices of the 16S rRNA. Forms an intersubunit bridge (bridge B4) with the 23S rRNA of the 50S subunit in the ribosome. This is Small ribosomal subunit protein uS15 from Acidithiobacillus ferrooxidans (strain ATCC 23270 / DSM 14882 / CIP 104768 / NCIMB 8455) (Ferrobacillus ferrooxidans (strain ATCC 23270)).